The chain runs to 380 residues: PqqA peptide cyclase (380 aa).

One can recognise a Radical SAM core domain in the interval 12 to 228 (FGIPLAVLLE…EEARERLKGR (217 aa)). Residues C26, C30, and C33 each coordinate [4Fe-4S] cluster.

This sequence belongs to the radical SAM superfamily. PqqE family. Interacts with PqqD. The interaction is necessary for activity of PqqE. The cofactor is [4Fe-4S] cluster.

The catalysed reaction is [PQQ precursor protein] + S-adenosyl-L-methionine = E-Y cross-linked-[PQQ precursor protein] + 5'-deoxyadenosine + L-methionine + H(+). It functions in the pathway cofactor biosynthesis; pyrroloquinoline quinone biosynthesis. Its function is as follows. Catalyzes the cross-linking of a glutamate residue and a tyrosine residue in the PqqA protein as part of the biosynthesis of pyrroloquinoline quinone (PQQ). This Bradyrhizobium diazoefficiens (strain JCM 10833 / BCRC 13528 / IAM 13628 / NBRC 14792 / USDA 110) protein is PqqA peptide cyclase.